We begin with the raw amino-acid sequence, 154 residues long: Ribosome maturation factor RimP (154 aa).

This sequence belongs to the RimP family.

Its subcellular location is the cytoplasm. Required for maturation of 30S ribosomal subunits. The protein is Ribosome maturation factor RimP of Salmonella agona (strain SL483).